The sequence spans 341 residues: S-adenosylmethionine:tRNA ribosyltransferase-isomerase (341 aa).

It belongs to the QueA family. As to quaternary structure, monomer.

It is found in the cytoplasm. The enzyme catalyses 7-aminomethyl-7-carbaguanosine(34) in tRNA + S-adenosyl-L-methionine = epoxyqueuosine(34) in tRNA + adenine + L-methionine + 2 H(+). Its pathway is tRNA modification; tRNA-queuosine biosynthesis. Functionally, transfers and isomerizes the ribose moiety from AdoMet to the 7-aminomethyl group of 7-deazaguanine (preQ1-tRNA) to give epoxyqueuosine (oQ-tRNA). The protein is S-adenosylmethionine:tRNA ribosyltransferase-isomerase of Clostridium botulinum (strain Eklund 17B / Type B).